Here is a 300-residue protein sequence, read N- to C-terminus: NAD kinase (300 aa).

Aspartate 75 functions as the Proton acceptor in the catalytic mechanism. Residues 75 to 76 (DG), 149 to 150 (ND), arginine 177, aspartate 179, 190 to 195 (TAYALS), alanine 214, and glutamine 248 each bind NAD(+).

It belongs to the NAD kinase family. A divalent metal cation is required as a cofactor.

The protein resides in the cytoplasm. The enzyme catalyses NAD(+) + ATP = ADP + NADP(+) + H(+). In terms of biological role, involved in the regulation of the intracellular balance of NAD and NADP, and is a key enzyme in the biosynthesis of NADP. Catalyzes specifically the phosphorylation on 2'-hydroxyl of the adenosine moiety of NAD to yield NADP. The sequence is that of NAD kinase from Burkholderia vietnamiensis (strain G4 / LMG 22486) (Burkholderia cepacia (strain R1808)).